Consider the following 431-residue polypeptide: Glutamate-1-semialdehyde 2,1-aminomutase 2 (431 aa).

The residue at position 268 (Lys268) is an N6-(pyridoxal phosphate)lysine.

It belongs to the class-III pyridoxal-phosphate-dependent aminotransferase family. HemL subfamily. In terms of assembly, homodimer. Pyridoxal 5'-phosphate is required as a cofactor.

Its subcellular location is the cytoplasm. It carries out the reaction (S)-4-amino-5-oxopentanoate = 5-aminolevulinate. It participates in porphyrin-containing compound metabolism; protoporphyrin-IX biosynthesis; 5-aminolevulinate from L-glutamyl-tRNA(Glu): step 2/2. This is Glutamate-1-semialdehyde 2,1-aminomutase 2 from Bacillus licheniformis (strain ATCC 14580 / DSM 13 / JCM 2505 / CCUG 7422 / NBRC 12200 / NCIMB 9375 / NCTC 10341 / NRRL NRS-1264 / Gibson 46).